The primary structure comprises 512 residues: Maturase K (512 aa).

Belongs to the intron maturase 2 family. MatK subfamily.

Its subcellular location is the plastid. The protein resides in the chloroplast. Functionally, usually encoded in the trnK tRNA gene intron. Probably assists in splicing its own and other chloroplast group II introns. In Alisma canaliculatum (Water plantain), this protein is Maturase K.